The primary structure comprises 198 residues: MSEQEQKVEIPEVEKQEEVVVEETQQAEHSQEFDPLEEAIARVQELEEQLKTQIEEAANKEQDILLRSRAEIENLRRRTEQDVEKAHKFALEKFSKDILNTIDNLERALATPANKEDESVKALFDGVELTLKELVSTVGRFGVEAVGVVGEAFNPDLHQAISMQPAEGFETNQISVVLQKGYTLNGRVIRPAMVMVAA.

Over residues 1–18 (MSEQEQKVEIPEVEKQEE) the composition is skewed to basic and acidic residues. The tract at residues 1 to 33 (MSEQEQKVEIPEVEKQEEVVVEETQQAEHSQEF) is disordered.

Belongs to the GrpE family. In terms of assembly, homodimer.

Its subcellular location is the cytoplasm. Participates actively in the response to hyperosmotic and heat shock by preventing the aggregation of stress-denatured proteins, in association with DnaK and GrpE. It is the nucleotide exchange factor for DnaK and may function as a thermosensor. Unfolded proteins bind initially to DnaJ; upon interaction with the DnaJ-bound protein, DnaK hydrolyzes its bound ATP, resulting in the formation of a stable complex. GrpE releases ADP from DnaK; ATP binding to DnaK triggers the release of the substrate protein, thus completing the reaction cycle. Several rounds of ATP-dependent interactions between DnaJ, DnaK and GrpE are required for fully efficient folding. In Haemophilus influenzae (strain ATCC 51907 / DSM 11121 / KW20 / Rd), this protein is Protein GrpE.